The primary structure comprises 485 residues: Noelin (485 aa).

The signal sequence occupies residues 1-16 (MSVPLLKIGVVLSTMA). Residues N33, N103, N187, N288, N307, N394, N431, and N473 are each glycosylated (N-linked (GlcNAc...) asparagine). The stretch at 87 to 225 (RDARTKQLRQ…ERLRACMQKL (139 aa)) forms a coiled coil. Residues 226–478 (ACGKLTGISD…QILYNVTLFH (253 aa)) form the Olfactomedin-like domain. C227 and C409 form a disulfide bridge.

As to quaternary structure, homotetramer; disulfide-linked. Dimer of dimers, giving rise to a V-shaped homotretramer. Isoform 1 and isoform 3 interact with RTN4R. Identified in a complex with RTN4R and LINGO1. Peripherally associated with AMPAR complex. AMPAR complex consists of an inner core made of 4 pore-forming GluA/GRIA proteins (GRIA1, GRIA2, GRIA3 and GRIA4) and 4 major auxiliary subunits arranged in a twofold symmetry. One of the two pairs of distinct binding sites is occupied either by CNIH2, CNIH3 or CACNG2, CACNG3. The other harbors CACNG2, CACNG3, CACNG4, CACNG8 or GSG1L. This inner core of AMPAR complex is complemented by outer core constituents binding directly to the GluA/GRIA proteins at sites distinct from the interaction sites of the inner core constituents. Outer core constituents include at least PRRT1, PRRT2, CKAMP44/SHISA9, FRRS1L and NRN1. The proteins of the inner and outer core serve as a platform for other, more peripherally associated AMPAR constituents, including OLFM1. Alone or in combination, these auxiliary subunits control the gating and pharmacology of the AMPAR complex and profoundly impact their biogenesis and protein processing. Interacts with OLFM2.

It localises to the secreted. The protein resides in the synapse. It is found in the endoplasmic reticulum. The protein localises to the cell projection. Its subcellular location is the axon. It localises to the perikaryon. Functionally, contributes to the regulation of axonal growth in the embryonic and adult central nervous system by inhibiting interactions between RTN4R and LINGO1. Inhibits RTN4R-mediated axon growth cone collapse. May play an important role in regulating the production of neural crest cells by the neural tube. May be required for normal responses to olfactory stimuli. The protein is Noelin (OLFM1) of Homo sapiens (Human).